Here is a 690-residue protein sequence, read N- to C-terminus: Calpain-9 (690 aa).

The segment at 1–23 (MPYLHRSLRPQPQPVPGDARTIH) is disordered. The region spanning 42–337 (LFEDADFPAS…FDKVEICNLT (296 aa)) is the Calpain catalytic domain. 3 residues coordinate Ca(2+): Leu-81, Gly-83, and Asp-88. Cys-97 is an active-site residue. Ca(2+) is bound at residue Glu-167. Residues His-254 and Asn-278 contribute to the active site. Ca(2+) contacts are provided by Glu-284, Asp-291, Leu-312, Asp-314, and Glu-316. The interval 338-521 (PDALEDSALH…PQEEETEEEQ (184 aa)) is domain III. EF-hand domains lie at 518-552 (EEEQ…VLQK), 561-589 (LSLL…FRVF), and 591-626 (DKLK…AGFQ). The segment at 522–690 (QFRALFQRVA…NEFISLTMNI (169 aa)) is domain IV. Residues Asp-574, Ser-576, Asn-578, Lys-580, Glu-585, Asp-604, Asp-606, Ser-608, Thr-610, and Glu-615 each contribute to the Ca(2+) site.

It belongs to the peptidase C2 family. As to expression, predominantly expressed in stomach and small intestine, although low levels of expression in other organs.

The protein localises to the cytoplasm. Its function is as follows. Calcium-regulated non-lysosomal thiol-protease. The protein is Calpain-9 (Capn9) of Mus musculus (Mouse).